The chain runs to 240 residues: RING finger protein 151 (240 aa).

Residues 20–58 (CSVCHGVLKRPVRLPCSHIFCKKCILRWLARQKTCPCCR) form an RING-type zinc finger. The TRAF-type zinc finger occupies 101 to 156 (GHQDSCPFELMVCPNEGCMLRVPRGALDEHRQNCQHGAYHRCSLGCGATLGPVERA).

The sequence is that of RING finger protein 151 (RNF151) from Bos taurus (Bovine).